Here is a 151-residue protein sequence, read N- to C-terminus: SsrA-binding protein (151 aa).

This sequence belongs to the SmpB family.

The protein resides in the cytoplasm. Required for rescue of stalled ribosomes mediated by trans-translation. Binds to transfer-messenger RNA (tmRNA), required for stable association of tmRNA with ribosomes. tmRNA and SmpB together mimic tRNA shape, replacing the anticodon stem-loop with SmpB. tmRNA is encoded by the ssrA gene; the 2 termini fold to resemble tRNA(Ala) and it encodes a 'tag peptide', a short internal open reading frame. During trans-translation Ala-aminoacylated tmRNA acts like a tRNA, entering the A-site of stalled ribosomes, displacing the stalled mRNA. The ribosome then switches to translate the ORF on the tmRNA; the nascent peptide is terminated with the 'tag peptide' encoded by the tmRNA and targeted for degradation. The ribosome is freed to recommence translation, which seems to be the essential function of trans-translation. The polypeptide is SsrA-binding protein (Lactobacillus acidophilus (strain ATCC 700396 / NCK56 / N2 / NCFM)).